A 1293-amino-acid polypeptide reads, in one-letter code: Receptor-type tyrosine-protein phosphatase C (1293 aa).

The signal sequence occupies residues 1–25; the sequence is MTMGLWLKLLAFGFALLDTEVFVTG. Over 26 to 566 the chain is Extracellular; sequence QTPTPSDELS…RNESTNFNAK (541 aa). Residues 43–174 form a disordered region; sequence LPQSDPLPAR…STTDISSGAS (132 aa). Composition is skewed to polar residues over residues 53–72, 88–110, and 149–169; these read TTES…SETT, QPDS…QADN, and LARN…TTDI. N-linked (GlcNAc...) asparagine glycosylation is present at asparagine 66. Asparagine 152, asparagine 163, asparagine 209, asparagine 213, asparagine 220, asparagine 255, asparagine 260, asparagine 292, asparagine 313, asparagine 324, asparagine 349, asparagine 418, asparagine 429, asparagine 459, and asparagine 491 each carry an N-linked (GlcNAc...) asparagine glycan. Fibronectin type-III domains are found at residues 376 to 472 and 473 to 568; these read IPET…TKAD and RPDK…AKAL. Residues 567–588 form a helical membrane-spanning segment; sequence ALIIFLVFLIIVTSIALLVVLY. Residues 589–1293 are Cytoplasmic-facing; sequence KIYDLRKKRS…SASPAPTQSS (705 aa). 2 consecutive Tyrosine-protein phosphatase domains span residues 642–901 and 933–1216; these read FLAE…LVEY and LEAE…IASI. A Phosphotyrosine modification is found at tyrosine 672. Substrate is bound by residues aspartate 810, 842 to 848, and glutamine 886; that span reads CSAGVGR. The Phosphocysteine intermediate role is filled by cysteine 842. Phosphoserine is present on residues serine 964, serine 983, serine 986, serine 990, serine 993, serine 994, and serine 998. The segment at 980 to 1003 is disordered; the sequence is LEMSKESEPESDESSDDDSDSEET. The span at 988 to 1001 shows a compositional bias: acidic residues; the sequence is PESDESSDDDSDSE. Cysteine 1157 (phosphocysteine intermediate) is an active-site residue. Serine 1229 carries the phosphoserine modification. Positions 1240–1293 are disordered; that stretch reads DGGKQDANCVRPDGPLNKAQEDSRGVGTPEPTNSAEEPEHAANGSASPAPTQSS. Position 1267 is a phosphothreonine (threonine 1267). The span at 1283 to 1293 shows a compositional bias: polar residues; that stretch reads GSASPAPTQSS. The residue at position 1286 (serine 1286) is a Phosphoserine.

It belongs to the protein-tyrosine phosphatase family. Receptor class 1/6 subfamily. In terms of assembly, interacts with SKAP1. Interacts with DPP4; the interaction is enhanced in an interleukin-12-dependent manner in activated lymphocytes. Binds GANAB and PRKCSH. Interacts with CD53; this interaction stabilizes PTPRC on the membrane and is required for optimal phosphatase activity. Interacts with CLEC10A. Post-translationally, heavily N- and O-glycosylated.

It is found in the cell membrane. The protein localises to the membrane raft. It localises to the synapse. It carries out the reaction O-phospho-L-tyrosyl-[protein] + H2O = L-tyrosyl-[protein] + phosphate. In terms of biological role, protein tyrosine-protein phosphatase required for T-cell activation through the antigen receptor. Acts as a positive regulator of T-cell coactivation upon binding to DPP4. The first PTPase domain has enzymatic activity, while the second one seems to affect the substrate specificity of the first one. Upon T-cell activation, recruits and dephosphorylates SKAP1 and FYN. Dephosphorylates LYN, and thereby modulates LYN activity. Interacts with CLEC10A at antigen presenting cell-T cell contact; CLEC10A on immature dendritic cells recognizes Tn antigen-carrying PTPRC/CD45 receptor on effector T cells and modulates T cell activation threshold to limit autoreactivity. This is Receptor-type tyrosine-protein phosphatase C from Mus musculus (Mouse).